Consider the following 1538-residue polypeptide: CLIP-associating protein 1 (1538 aa).

2 HEAT repeats span residues 87 to 124 and 163 to 200; these read AQIGTVLPSLIDRLGDAKDSVREQDQTLLLKIMDQAAN and LTLSKIVPHICNLLGDPNSQVRDAAINSLVEIYRHVGE. Residues 235-292 form a disordered region; sequence SANDKNFDDEDSVDGNRPSSASSTSSKAPPSSRRNVGMGTTRRLGSSTLGSKSSAAKE. Ser-246 bears the Phosphoserine mark. Residues 251–268 show a composition bias toward low complexity; that stretch reads RPSSASSTSSKAPPSSRR. HEAT repeat units follow at residues 405-440 and 441-477; these read HGAEAIMPTIFNLIPNSAKIMATSGVVAVRLIIRHT and HIPRLIPVITSNCTSKSVAVRRRCFEFLDLLLQEWQT. The interval 543-783 is disordered; sequence SDSIVSLPQS…DRFGLGQPGR (241 aa). Phosphoserine occurs at positions 545, 548, 558, 559, and 568. The span at 548–567 shows a compositional bias: low complexity; the sequence is SLPQSDRSSSSSQESLNRPL. Low complexity predominate over residues 574 to 594; the sequence is TGSTTSRASTVSTKSVSTTGS. Ser-600 carries the post-translational modification Phosphoserine. Over residues 606–628 the composition is skewed to low complexity; the sequence is AAASAKSKVSSSSGTTPFSSAAA. Ser-636, Ser-646, Ser-647, and Ser-649 each carry phosphoserine. Residues 645 to 658 show a composition bias toward polar residues; the sequence is QSSGSATNVASTPD. Thr-656 is modified (phosphothreonine). The tract at residues 662–785 is interaction with microtubules, MAPRE1 and MAPRE3; the sequence is RSRAKVVSQS…FGLGQPGRIP (124 aa). Residues 673–692 are compositionally biased toward low complexity; that stretch reads RSRSANPAGAGSRSSSPGKL. Phosphoserine is present on residues Ser-684, Ser-688, Ser-695, and Ser-705. A compositionally biased stretch (gly residues) spans 693–705; sequence LGSGYGGLTGGSS. Thr-711 is subject to Phosphothreonine. A Phosphoserine modification is found at Ser-714. Polar residues predominate over residues 724–733; sequence QGCSRETSPN. Phosphoserine is present on residues Ser-787, Ser-797, and Ser-823. The stretch at 974–1011 is one HEAT 5 repeat; it reads QQFNILMRFIVDQTQTPNLKVKVAILKYIESLARQMDP. Disordered regions lie at residues 1080–1120 and 1136–1156; these read HLKN…CSHG and AKHPPPFSQPNSIPTAPSHKA. Residues 1082–1097 are compositionally biased toward polar residues; that stretch reads KNSSNTSVGSPSNTIG. The residue at position 1091 (Ser-1091) is a Phosphoserine. Phosphothreonine occurs at positions 1095 and 1099. The span at 1106 to 1115 shows a compositional bias: low complexity; that stretch reads SRTSPLTSPT. At Ser-1113 the chain carries Phosphoserine. Phosphoserine occurs at positions 1196 and 1223. The interval 1215-1238 is disordered; sequence VSRDGGAASPATEGRGGSEVEGGR. The interval 1254-1538 is interaction with CLIP2; that stretch reads RAFPGPRARD…SSSSDVSTHS (285 aa). The tract at residues 1254-1538 is interaction with PHLDB2 and RSN; it reads RAFPGPRARD…SSSSDVSTHS (285 aa). The segment at 1256-1538 is localization to kinetochores; that stretch reads FPGPRARDYN…SSSSDVSTHS (283 aa). Positions 1299–1330 form a coiled coil; sequence DHSDLVADLLKELSNHNERVEERKGALLELLK. HEAT repeat units lie at residues 1342–1379 and 1460–1497; these read EHFKTILLLLLETLGDKDHSIRALALRVLREILRNQPA and QLLVDIIPGLLQGYDNTESSVRKASVFCLVAIYSVIGE.

It belongs to the CLASP family. Interacts with CLIP2, ERC1, MAPRE1, MAPRE3, microtubules, PHLDB2 and RSN. The interaction with ERC1 may be mediated by PHLDB2. Interacts with GCC2; recruits CLASP1 to Golgi membranes. Interacts with MACF1. Interacts with mtcl2 and MTCL1.

Its subcellular location is the cytoplasm. The protein resides in the cytoskeleton. It is found in the microtubule organizing center. It localises to the centrosome. The protein localises to the chromosome. Its subcellular location is the centromere. The protein resides in the kinetochore. It is found in the spindle. It localises to the golgi apparatus. The protein localises to the trans-Golgi network. Functionally, microtubule plus-end tracking protein that promotes the stabilization of dynamic microtubules. Involved in the nucleation of noncentrosomal microtubules originating from the trans-Golgi network (TGN). Required for the polarization of the cytoplasmic microtubule arrays in migrating cells towards the leading edge of the cell. May act at the cell cortex to enhance the frequency of rescue of depolymerizing microtubules by attaching their plus-ends to cortical platforms composed of ERC1 and PHLDB2. This cortical microtubule stabilizing activity is regulated at least in part by phosphatidylinositol 3-kinase signaling. Also performs a similar stabilizing function at the kinetochore which is essential for the bipolar alignment of chromosomes on the mitotic spindle. This is CLIP-associating protein 1 (CLASP1) from Homo sapiens (Human).